A 333-amino-acid polypeptide reads, in one-letter code: Phosphate acyltransferase (333 aa).

This sequence belongs to the PlsX family. Homodimer. Probably interacts with PlsY.

It is found in the cytoplasm. The enzyme catalyses a fatty acyl-[ACP] + phosphate = an acyl phosphate + holo-[ACP]. It functions in the pathway lipid metabolism; phospholipid metabolism. Catalyzes the reversible formation of acyl-phosphate (acyl-PO(4)) from acyl-[acyl-carrier-protein] (acyl-ACP). This enzyme utilizes acyl-ACP as fatty acyl donor, but not acyl-CoA. The polypeptide is Phosphate acyltransferase (Lactobacillus johnsonii (strain CNCM I-12250 / La1 / NCC 533)).